Consider the following 538-residue polypeptide: MSLRPSTRAELRKKIYKTGVDADEARRRREDNLVEIRKNKREDSLLKKRREGMMLQQQLPLGAGLDGPQTAAAVEKRLEGIPMMVQGVYSDDPQAQLEATTQFRKLLSIERSPPIDEVIKAGVIPRFVEFLGRHDHPQLQFEAAWALTNVASGTSDHTRVVIEQGAVPIFVKLLTSASDDVREQAVWALGNVAGDSPNCRNLVLNYGALEPLLAQLNENSKLSMLRNATWTLSNFCRGKPPTPFEQVKPALPILRQLIYLNDEEVLTDACWALSYLSDGPNDKIQAVIEAGVCPRLVELLGHQSPTVLIPALRTVGNIVTGDDSQTQFIIESGVLPHLYNLLTQNHKKSIKKEACWTISNITAGNKLQIEAVVGAGIILPLVHLLQNAEFDIKKEAAWAISNATSGGSHEQIQYLVTQGCIKPLCDLLICPDPRIVTVCLEGLENILKVGEADKEMGLNSGVNLYAQIIEESDGLDKVENLQSHDNNEIYEKAVKILERYWAEEEEEQILQDGGNDNSQQAFNFGNNPAAPVGGFKFA.

One can recognise an IBB domain in the interval 1–58 (MSLRPSTRAELRKKIYKTGVDADEARRRREDNLVEIRKNKREDSLLKKRREGMMLQQQ). 8 ARM repeats span residues 112 to 152 (SPPI…NVAS), 155 to 194 (SDHT…NVAG), 197 to 237 (PNCR…NFCR), 239 to 278 (KPPT…YLSD), 281 to 320 (NDKI…NIVT), 323 to 363 (DSQT…NITA), 366 to 405 (KLQI…NATS), and 409 to 448 (HEQI…NILK).

Belongs to the importin alpha family. As to quaternary structure, forms a complex with importin subunit beta-1. Interacts with A.tumefaciens VirD2 and VirE2.

Its subcellular location is the nucleus envelope. Binds to conventional NLS motifs and mediates nuclear protein import across the nuclear envelope. Acts as a cellular receptor for the nuclear import of the virD2 protein of Agrobacterium and is essential for Agrobacterium-mediated root transformation. The chain is Importin subunit alpha-4 from Arabidopsis thaliana (Mouse-ear cress).